A 397-amino-acid polypeptide reads, in one-letter code: Elongation factor Tu (397 aa).

The tr-type G domain occupies 10–206; sequence KPHVNIGTIG…AVDENVPDPE (197 aa). The segment at 19-26 is G1; it reads GHVDHGKT. Residue 19 to 26 coordinates GTP; sequence GHVDHGKT. Thr26 contributes to the Mg(2+) binding site. The G2 stretch occupies residues 62 to 66; the sequence is GITIQ. Positions 83–86 are G3; the sequence is DAPG. GTP contacts are provided by residues 83-87 and 138-141; these read DAPGH and NKAD. Residues 138 to 141 form a G4 region; that stretch reads NKAD. Residues 176 to 178 form a G5 region; the sequence is SAL.

Belongs to the TRAFAC class translation factor GTPase superfamily. Classic translation factor GTPase family. EF-Tu/EF-1A subfamily. In terms of assembly, monomer.

It localises to the cytoplasm. It catalyses the reaction GTP + H2O = GDP + phosphate + H(+). In terms of biological role, GTP hydrolase that promotes the GTP-dependent binding of aminoacyl-tRNA to the A-site of ribosomes during protein biosynthesis. The chain is Elongation factor Tu from Saccharopolyspora erythraea (strain ATCC 11635 / DSM 40517 / JCM 4748 / NBRC 13426 / NCIMB 8594 / NRRL 2338).